The following is a 197-amino-acid chain: Imidazoleglycerol-phosphate dehydratase (197 aa).

Belongs to the imidazoleglycerol-phosphate dehydratase family.

It is found in the cytoplasm. It catalyses the reaction D-erythro-1-(imidazol-4-yl)glycerol 3-phosphate = 3-(imidazol-4-yl)-2-oxopropyl phosphate + H2O. Its pathway is amino-acid biosynthesis; L-histidine biosynthesis; L-histidine from 5-phospho-alpha-D-ribose 1-diphosphate: step 6/9. In Pseudomonas entomophila (strain L48), this protein is Imidazoleglycerol-phosphate dehydratase.